An 82-amino-acid chain; its full sequence is uncharacterized protein (82 aa).

The interval 1–20 (MMNLSPPFKSPSGSSRAGRR) is disordered.

This is an uncharacterized protein from Archaeoglobus fulgidus (strain ATCC 49558 / DSM 4304 / JCM 9628 / NBRC 100126 / VC-16).